The primary structure comprises 130 residues: Small ribosomal subunit protein uS8 (130 aa).

It belongs to the universal ribosomal protein uS8 family. Part of the 30S ribosomal subunit. Contacts proteins S5 and S12.

Functionally, one of the primary rRNA binding proteins, it binds directly to 16S rRNA central domain where it helps coordinate assembly of the platform of the 30S subunit. This is Small ribosomal subunit protein uS8 from Alteromonas mediterranea (strain DSM 17117 / CIP 110805 / LMG 28347 / Deep ecotype).